Here is a 194-residue protein sequence, read N- to C-terminus: Imidazole glycerol phosphate synthase subunit HisH (194 aa).

Residues 1–194 (MIIIDTGCAN…QLLKNFVENL (194 aa)) enclose the Glutamine amidotransferase type-1 domain. The Nucleophile role is filled by Cys-75. Catalysis depends on residues His-175 and Glu-177.

Heterodimer of HisH and HisF.

It localises to the cytoplasm. The catalysed reaction is 5-[(5-phospho-1-deoxy-D-ribulos-1-ylimino)methylamino]-1-(5-phospho-beta-D-ribosyl)imidazole-4-carboxamide + L-glutamine = D-erythro-1-(imidazol-4-yl)glycerol 3-phosphate + 5-amino-1-(5-phospho-beta-D-ribosyl)imidazole-4-carboxamide + L-glutamate + H(+). It catalyses the reaction L-glutamine + H2O = L-glutamate + NH4(+). It functions in the pathway amino-acid biosynthesis; L-histidine biosynthesis; L-histidine from 5-phospho-alpha-D-ribose 1-diphosphate: step 5/9. IGPS catalyzes the conversion of PRFAR and glutamine to IGP, AICAR and glutamate. The HisH subunit catalyzes the hydrolysis of glutamine to glutamate and ammonia as part of the synthesis of IGP and AICAR. The resulting ammonia molecule is channeled to the active site of HisF. The polypeptide is Imidazole glycerol phosphate synthase subunit HisH (Mannheimia succiniciproducens (strain KCTC 0769BP / MBEL55E)).